The chain runs to 579 residues: uncharacterized protein (579 aa).

3 helical membrane passes run 173–193 (IAMG…GGLA), 196–216 (FVAA…MIGA), and 218–238 (YLGT…GFGA).

This sequence belongs to the TMCO4 family.

It is found in the cytoplasm. The protein resides in the nucleus membrane. This is an uncharacterized protein from Schizosaccharomyces pombe (strain 972 / ATCC 24843) (Fission yeast).